Here is an 862-residue protein sequence, read N- to C-terminus: Fork head protein homolog 2 (862 aa).

The FHA domain maps to 83 to 152; it reads VSIGRNTDPL…NGAKVNFQRT (70 aa). Residues 339 to 430 constitute a DNA-binding region (fork-head); the sequence is VKPPHSYATM…QQEFLNKWNT (92 aa). 4 disordered regions span residues 498–528, 611–663, 698–730, and 750–846; these read PSKGNLPASQQSQPPVSHQNQSQQPPPQEQR, SDSA…GTTT, PERGSANRARSPLHSNSNNTNNNGANNSNLQTS, and ESNN…ANAK. A compositionally biased stretch (low complexity) spans 504 to 520; that stretch reads PASQQSQPPVSHQNQSQ. Residues 611-644 are compositionally biased toward polar residues; it reads SDSADKSTNNNGGTKMNLPAISTSSLDENGNLEP. The span at 645-655 shows a compositional bias: low complexity; that stretch reads TTTTSSGNSNS. At Ser708 the chain carries Phosphoserine. Residues 712-726 show a composition bias toward low complexity; it reads SNSNNTNNNGANNSN. Composition is skewed to polar residues over residues 750-770 and 778-788; these read ESNNDNRRLTPSTSKSQNVKS and LQFSSTNNTPA. Basic and acidic residues predominate over residues 804–829; the sequence is IKAKENENATSEKDSDSNSNDLETKD. Residues 830 to 844 show a composition bias toward polar residues; sequence INSSPLKNQGGSTAN. 2 positions are modified to phosphoserine: Ser832 and Ser833.

As to quaternary structure, interacts with MCM1. Interacts with NDD1. Interacts with the origin recognition complex (ORC) composed of ORC1 to ORC6.

It localises to the nucleus. The protein resides in the cytoplasm. The protein localises to the cytosol. Functionally, transcription factor that regulates the expression of the CLB2 cluster of genes during the G2/M phase of the mitotic cell cycle. The CLB2 cluster of genes includes mitotic regulators such as CLB1, CLB2, CDC5 and CDC20 as well as SWI5 and ACE2, transcription factors required for the subsequent temporal wave of cell cycle regulated gene expression in the M/G1 phase interval. Involved in HMRa silencing. FKH1 and FKH2 associate with the coding regions of active genes and influence, in opposing ways, transcriptional elongation and termination, and coordinate early transcription elongation and pre-mRNA processing. Both FKH1 and FKH2 play a role as regulators of lifespan in collaboration with the anaphase-promoting complex (APC), likely through combined regulation of stress response, genomic stability, and cell cycle regulation. FKH1 and FKH2 function also in controlling yeast cell morphology by preventing preudohyphal growth. Acts as a rate-limiting replication origin activator via its interaction with the origin recognition complex (ORC). The sequence is that of Fork head protein homolog 2 from Saccharomyces cerevisiae (strain ATCC 204508 / S288c) (Baker's yeast).